The primary structure comprises 226 residues: MLRASFAGSPYVGVFARATDDVLLLRSDVDDDTADAMAAELDIPAVATTIGGSGTVGALATGNENGILVTSNVTMREKEAIETTASVSVTELPGRINAAGNVILANDYGAYVHPDLSTEAVESIESALNVPVARGKLADVRTVGTAAVATNRGVLCHPKAREPELEAIEDHLDVRADIGTVNYGAPLVGSGIVAGQTGYVVGEDTTGPELTRIEDTLGYLESITSE.

This sequence belongs to the eIF-6 family.

In terms of biological role, binds to the 50S ribosomal subunit and prevents its association with the 30S ribosomal subunit to form the 70S initiation complex. The sequence is that of Translation initiation factor 6 from Haloquadratum walsbyi (strain DSM 16790 / HBSQ001).